The primary structure comprises 168 residues: Pleiotrophin (168 aa).

An N-terminal signal peptide occupies residues 1 to 32 (MQTPQYLQQRRKFAAAFLAFIFILAAVDTAEA). Intrachain disulfides connect cysteine 47–cysteine 76, cysteine 55–cysteine 85, cysteine 62–cysteine 89, cysteine 99–cysteine 131, and cysteine 109–cysteine 141. Chondroitin sulfate binding regions lie at residues 92–99 (KKQFGAEC) and 123–131 (KRALHNADC). The segment at 141-168 (CGKLTKSKPQAESKKKKKEGKKQEKMLD) is disordered. Residues 147 to 168 (SKPQAESKKKKKEGKKQEKMLD) are chondroitin sulfate A binding.

As to quaternary structure, interacts with ALK and NEK6. Interacts with PTPRZ1 (via chondroitin sulfate groups); promotes formation of homooligomers; oligomerization impairs tyrosine phosphatase activity. Forms a complex with PTPRZ1 and CTNNB1; this complex inactivates PTPRZ1 protein tyrosine phosphatase activity through PTN interaction and stimulates tyrosine phosphorylation of CTNNB1. Interacts with ITGB3 and ITGA5. Forms a complex with PTPRZ1 and integrin alpha-V/beta-3 (ITGAV:ITGB3) that stimulates endothelial cell migration through ITGB3 'Tyr-773' phosphorylation. Interacts with SDC3 (via heparan sulfate chains); this interaction mediates the neurite outgrowth-promoting signal from PTN to the cytoskeleton of growing neurites; this interaction mediates osteoblast recruitment. Interacts with GPC2 (via heparan sulfate); this interaction promotes neurite outgrowth through binding of PTN with chondroitin sulfate of proteoglycans, thereby releasing PTPRS of chondroitin sulfate proteoglycans (CSPGs) and leading to binding with heparan sulfate of GPC2. In terms of processing, phosphorylated by NEK6.

It localises to the secreted. Secreted growth factor that mediates its signal through cell-surface proteoglycan and non-proteoglycan receptors. Binds cell-surface proteoglycan receptor via their chondroitin sulfate (CS) groups. Thereby regulates many processes like cell proliferation, cell survival, cell growth, cell differentiation and cell migration in several tissues namely neuron and bone. Also plays a role in synaptic plasticity and learning-related behavior by inhibiting long-term synaptic potentiation. Binds PTPRZ1, leading to neutralization of the negative charges of the CS chains of PTPRZ1, inducing PTPRZ1 clustering, thereby causing the dimerization and inactivation of its phosphatase activity leading to increased tyrosine phosphorylation of each of the PTPRZ1 substrates like ALK, CTNNB1 or AFAP1L2 in order to activate the PI3K-AKT pathway. Through PTPRZ1 binding controls oligodendrocyte precursor cell differentiation by enhancing the phosphorylation of AFAP1L2 in order to activate the PI3K-AKT pathway. Forms a complex with PTPRZ1 and integrin alpha-V/beta-3 (ITGAV:ITGB3) that stimulates endothelial cell migration through SRC dephosphorylation and activation that consequently leads to ITGB3 'Tyr-773' phosphorylation. In adult hippocampus promotes dendritic arborization, spine development, and functional integration and connectivity of newborn granule neurons through ALK by activating AKT signaling pathway. Binds GPC2 and chondroitin sulfate proteoglycans (CSPGs) at the neuron surface, leading to abrogation of binding between PTPRS and CSPGs and neurite outgrowth promotion. Binds SDC3 and mediates bone formation by recruiting and attaching osteoblasts/osteoblast precursors to the sites for new bone deposition. Binds ALK and promotes cell survival and cell proliferation through MAPK pathway activation. Inhibits proliferation and enhances differentiation of neural stem cells by inhibiting FGF2-induced fibroblast growth factor receptor signaling pathway. Mediates regulatory mechanisms in normal hemostasis and in hematopoietic regeneration and in maintaining the balance of myeloid and lymphoid regeneration. In addition may play a role in the female reproductive system, auditory response and the progesterone-induced decidualization pathway. The protein is Pleiotrophin of Bos taurus (Bovine).